Here is a 286-residue protein sequence, read N- to C-terminus: 4-diphosphocytidyl-2-C-methyl-D-erythritol kinase (286 aa).

The active site involves Lys-10. 100-110 contributes to the ATP binding site; sequence PMGSGLGGGSS. The active site involves Asp-142.

Belongs to the GHMP kinase family. IspE subfamily. In terms of assembly, homodimer.

The enzyme catalyses 4-CDP-2-C-methyl-D-erythritol + ATP = 4-CDP-2-C-methyl-D-erythritol 2-phosphate + ADP + H(+). It participates in isoprenoid biosynthesis; isopentenyl diphosphate biosynthesis via DXP pathway; isopentenyl diphosphate from 1-deoxy-D-xylulose 5-phosphate: step 3/6. Functionally, catalyzes the phosphorylation of the position 2 hydroxy group of 4-diphosphocytidyl-2C-methyl-D-erythritol. This Buchnera aphidicola subsp. Acyrthosiphon pisum (strain APS) (Acyrthosiphon pisum symbiotic bacterium) protein is 4-diphosphocytidyl-2-C-methyl-D-erythritol kinase.